A 158-amino-acid chain; its full sequence is Ribonucleases P/MRP protein subunit POP6 (158 aa).

A coiled-coil region spans residues 51-71 (KNDNIKKSVNKLDKQINMADR).

In terms of assembly, component of nuclear RNase P and RNase MRP complexes. RNase P consists of an RNA moiety and at least 9 protein subunits including POP1, POP3, POP4, POP5, POP6, POP7, POP8, RPP1 and RPR2. RNase MRP complex consists of an RNA moiety and at least 10 protein subunits including POP1, POP3, POP4, POP5, POP6, POP7, POP8, RMP1, RPP1 and SNM1, many of which are shared with the RNase P complex.

It is found in the nucleus. It carries out the reaction Endonucleolytic cleavage of RNA, removing 5'-extranucleotides from tRNA precursor.. In terms of biological role, component of ribonuclease P, a protein complex that generates mature tRNA molecules by cleaving their 5'-ends. Also a component of RNase MRP, which cleaves pre-rRNA sequences. The chain is Ribonucleases P/MRP protein subunit POP6 (POP6) from Saccharomyces cerevisiae (strain ATCC 204508 / S288c) (Baker's yeast).